The primary structure comprises 359 residues: Fructose-bisphosphate aldolase 1 (359 aa).

Residue S50 participates in D-glyceraldehyde 3-phosphate binding. D83 acts as the Proton donor in catalysis. H84, D105, E142, and H198 together coordinate Zn(2+). G199 is a binding site for dihydroxyacetone phosphate. H232 contributes to the Zn(2+) binding site. Dihydroxyacetone phosphate contacts are provided by residues 233-235 (GSS) and 275-278 (NIDT).

This sequence belongs to the class II fructose-bisphosphate aldolase family. Homodimer. Zn(2+) is required as a cofactor.

The enzyme catalyses beta-D-fructose 1,6-bisphosphate = D-glyceraldehyde 3-phosphate + dihydroxyacetone phosphate. It participates in carbohydrate biosynthesis; Calvin cycle. It functions in the pathway carbohydrate degradation; glycolysis; D-glyceraldehyde 3-phosphate and glycerone phosphate from D-glucose: step 4/4. In terms of biological role, catalyzes the aldol condensation of dihydroxyacetone phosphate (DHAP or glycerone-phosphate) with glyceraldehyde 3-phosphate (G3P) to form fructose 1,6-bisphosphate (FBP) in gluconeogenesis and the reverse reaction in glycolysis. This is Fructose-bisphosphate aldolase 1 (cfxA) from Cereibacter sphaeroides (Rhodobacter sphaeroides).